A 757-amino-acid polypeptide reads, in one-letter code: Relaxin receptor 1 (757 aa).

The Extracellular segment spans residues 1–409 (MTSGSVFFYI…ENLLASIIQR (409 aa)). The region spanning 26-63 (KCSLGYFPCGNITKCLPQLLHCNGVDDCGNQADEDNCG) is the LDL-receptor class A domain. 3 disulfides stabilise this stretch: cysteine 27–cysteine 40, cysteine 34–cysteine 53, and cysteine 47–cysteine 62. The N-linked (GlcNAc...) asparagine glycan is linked to asparagine 36. Ca(2+)-binding residues include leucine 45, asparagine 48, valine 50, aspartate 52, aspartate 58, and glutamate 59. In terms of domain architecture, LRRNT spans 91-127 (ETPECLVGSVPVQCLCQGLELDCDETNLRAVPSVSSN). An N-linked (GlcNAc...) asparagine glycan is attached at asparagine 127. 9 LRR repeats span residues 151–172 (DLQKLYLQNNKITSISIYAFRG), 175–196 (SLTKLYLSHNRITFLKPGVFED), 199–220 (RLEWLIIEDNHLSRISPPTFYG), 223–244 (SLILLVLMNNVLTRLPDKPLCQ), 248–269 (RLHWLDLEGNHIHNLRNLTFIS), 272–293 (NLTVLVMRKNKINHLNENTFAP), 296–317 (KLDELDLGSNKIENLPPLIFKD), 320–341 (ELSQLNLSYNPIQKIQANQFDY), and 344–365 (KLKSLSLEGIEISNIQQRMFRP). 2 N-linked (GlcNAc...) asparagine glycosylation sites follow: asparagine 264 and asparagine 272. Asparagine 325 carries N-linked (GlcNAc...) asparagine glycosylation. Asparagine 368 is a glycosylation site (N-linked (GlcNAc...) asparagine). A helical transmembrane segment spans residues 410-430 (VFVWVVSAVTCFGNIFVICMR). The Cytoplasmic portion of the chain corresponds to 431-443 (PYIRSENKLYAMS). A helical membrane pass occupies residues 444–464 (IISLCCADCLMGIYLFVIGGF). The Extracellular segment spans residues 465–486 (DLKFRGEYNKHAQLWMESTHCQ). An intrachain disulfide couples cysteine 485 to cysteine 563. A helical membrane pass occupies residues 487-507 (LVGSLAILSTEVSVLLLTFLT). Over 508-527 (LEKYICIVYPFRCVRPGKCR) the chain is Cytoplasmic. The chain crosses the membrane as a helical span at residues 528–548 (TITVLILIWITGFIVAFIPLS). Topologically, residues 549 to 577 (NKEFFKNYYGTNGVCFPLHSEDTESIGAQ) are extracellular. Residues 578-598 (IYSVAIFLGINLAAFIIIVFS) traverse the membrane as a helical segment. The Cytoplasmic portion of the chain corresponds to 599–629 (YGSMFYSVHQSAITATEIRNQVKKEMILAKR). The helical transmembrane segment at 630–650 (FFFIVFTDALCWIPIFVVKFL) threads the bilayer. A topological domain (extracellular) is located at residue serine 651. A helical transmembrane segment spans residues 652–672 (LLQVEIPGTITSWVVIFILPI). At 673-757 (NSALNPILYT…SQSTRLNSYS (85 aa)) the chain is on the cytoplasmic side.

Belongs to the G-protein coupled receptor 1 family. In terms of assembly, interacts with C1QTNF8. In terms of tissue distribution, expressed in the brain, kidney, testis, placenta, uterus, ovary, adrenal, prostate, skin and heart. Not detected in spleen.

The protein resides in the cell membrane. Receptor for relaxins. The activity of this receptor is mediated by G proteins leading to stimulation of adenylate cyclase and an increase of cAMP. Binding of the ligand may also activate a tyrosine kinase pathway that inhibits the activity of a phosphodiesterase that degrades cAMP. The protein is Relaxin receptor 1 (RXFP1) of Homo sapiens (Human).